A 159-amino-acid chain; its full sequence is Cytochrome c nitrite reductase subunit NrfH (159 aa).

Topologically, residues 2–14 (SEEKSRNGPARLK) are cytoplasmic. The helical; Signal-anchor for type II membrane protein transmembrane segment at 15–33 (LVLGGATLGVVALATVAFG) threads the bilayer. The Periplasmic portion of the chain corresponds to 34 to 159 (MKYTDQRPFC…PISTREVADE (126 aa)). Cys43, Cys46, Met49, His61, and Cys66 together coordinate heme. Residue Asn67 participates in a menaquinol binding. Positions 69 and 70 each coordinate heme. A menaquinol-binding residues include Lys82 and Asp89. Residue Asp89 participates in heme binding. Residues 99–100 (GD) form an interaction with NrfA region. The heme site is built by Cys116, Cys119, His120, Cys136, Cys139, His140, and His145. An interaction with NrfA region spans residues 123 to 158 (TNVEVASMEAKKYCTDCHRNVQHMRMKPISTREVAD).

It belongs to the NapC/NirT/NrfH family. In terms of assembly, component of the NrfHA cytochrome c nitrite reductase complex composed of 4 NrfA catalytic subunits and 2 NrfH quinone-binding subunits. Interacts with NrfA homodimer. Heme serves as cofactor.

It is found in the cell inner membrane. In terms of biological role, electron donor subunit of the cytochrome c nitrite reductase holocomplex NrfHA. Acquires electrons from the menaquinone pool and mediates their transfer to the catalytic subunit NrfA in an anaerobic respiratory process of nitrite. The other biological function of the NrfHA holocomplex is to detoxify nitrite. This function is essential for the survival of this organism as it enables it to overcome inhibition by nitrite, which is produced by other organisms living in the same environment. This Nitratidesulfovibrio vulgaris (strain ATCC 29579 / DSM 644 / CCUG 34227 / NCIMB 8303 / VKM B-1760 / Hildenborough) (Desulfovibrio vulgaris) protein is Cytochrome c nitrite reductase subunit NrfH.